The following is a 78-amino-acid chain: MLSNSLCPRLTNSLILSKLILVYQLFIFTGALIMDKQKVNNNIVEEENLSKEKEIGGIKGLEPTRYGDWQHKGKVTDF.

It belongs to the SDHAF4 family.

This chain is UPF0369 protein RP167, found in Rickettsia prowazekii (strain Madrid E).